A 140-amino-acid polypeptide reads, in one-letter code: Small ribosomal subunit protein uS12 (140 aa).

Residues 1-44 (MPTFNQLVRKGRKTMEKNSQAPALQKGFNSLRKKTTDASAPQKR) are disordered. D102 carries the post-translational modification 3-methylthioaspartic acid. Residues 120–140 (VAKRRQARSKYGAKRPKEAKK) are disordered. The segment covering 121–140 (AKRRQARSKYGAKRPKEAKK) has biased composition (basic residues).

The protein belongs to the universal ribosomal protein uS12 family. Part of the 30S ribosomal subunit. Contacts proteins S8 and S17. May interact with IF1 in the 30S initiation complex.

With S4 and S5 plays an important role in translational accuracy. Functionally, interacts with and stabilizes bases of the 16S rRNA that are involved in tRNA selection in the A site and with the mRNA backbone. Located at the interface of the 30S and 50S subunits, it traverses the body of the 30S subunit contacting proteins on the other side and probably holding the rRNA structure together. The combined cluster of proteins S8, S12 and S17 appears to hold together the shoulder and platform of the 30S subunit. The polypeptide is Small ribosomal subunit protein uS12 (Lachnoclostridium phytofermentans (strain ATCC 700394 / DSM 18823 / ISDg) (Clostridium phytofermentans)).